The sequence spans 164 residues: Phosphopantetheine adenylyltransferase (164 aa).

Serine 10 serves as a coordination point for substrate. Residues 10–11 (SF) and histidine 18 each bind ATP. 3 residues coordinate substrate: lysine 42, threonine 79, and arginine 93. Residues 94-96 (GLR), glutamate 104, and 129-135 (VRPITAS) each bind ATP.

The protein belongs to the bacterial CoaD family. As to quaternary structure, homohexamer. Mg(2+) is required as a cofactor.

The protein resides in the cytoplasm. It catalyses the reaction (R)-4'-phosphopantetheine + ATP + H(+) = 3'-dephospho-CoA + diphosphate. It participates in cofactor biosynthesis; coenzyme A biosynthesis; CoA from (R)-pantothenate: step 4/5. In terms of biological role, reversibly transfers an adenylyl group from ATP to 4'-phosphopantetheine, yielding dephospho-CoA (dPCoA) and pyrophosphate. The polypeptide is Phosphopantetheine adenylyltransferase (Bradyrhizobium sp. (strain ORS 278)).